Reading from the N-terminus, the 1180-residue chain is Tudor domain-containing protein 1 (1180 aa).

Disordered regions lie at residues 1 to 66 (MSVK…KKNN) and 79 to 138 (SQED…RPAK). Residues 27–41 (NFEKNENKLPPHESL) show a composition bias toward basic and acidic residues. Composition is skewed to polar residues over residues 79-91 (SQED…NPNG) and 110-122 (NSVS…SNSP). Residues C170, C173, C181, C184, C190, C194, H202, and C206 each coordinate Zn(2+). The MYND-type zinc-finger motif lies at 170–206 (CHRCGLFGSLRCSQCKQTYYCSTACQRRDWSAHSIVC). In terms of domain architecture, Tudor 1 spans 312-372 (IPVKGEVCIA…YHLNRNIDLF (61 aa)). Positions 450 to 469 (SGQDSKKENADQSDPEDVGK) are disordered. Tudor domains lie at 541–600 (YPAI…LLEL), 762–821 (KAEI…FLNL), and 990–1048 (RPRI…HLAL).

The protein belongs to the TDRD1 family. In terms of assembly, found in a mRNP complex, at least composed of TDRD1, TDRD6, TDRD7 and DDX4. Interacts with MAEL. Interacts with PIWIL1, PIWIL2 and PIWIL4 (when methylated on arginine residues). Interacts with TDRD12. In terms of tissue distribution, testis and ovary specific. Also expressed in several cancers.

The protein resides in the cytoplasm. In terms of biological role, plays a central role during spermatogenesis by participating in the repression transposable elements and preventing their mobilization, which is essential for the germline integrity. Acts via the piRNA metabolic process, which mediates the repression of transposable elements during meiosis by forming complexes composed of piRNAs and Piwi proteins and governs the methylation and subsequent repression of transposons. Required for the localization of Piwi proteins to the meiotic nuage. Involved in the piRNA metabolic process by ensuring the entry of correct transcripts into the normal piRNA pool and limiting the entry of cellular transcripts into the piRNA pathway. May act by allowing the recruitment of piRNA biogenesis or loading factors that ensure the correct entry of transcripts and piRNAs into Piwi proteins. This chain is Tudor domain-containing protein 1 (TDRD1), found in Homo sapiens (Human).